A 650-amino-acid chain; its full sequence is Chaperone protein DnaK (650 aa).

Phosphothreonine; by autocatalysis is present on Thr-200. The segment covering 611 to 634 (AQQAGAAGAAGAAAEGASAQGGAQ) has biased composition (low complexity). Residues 611–650 (AQQAGAAGAAGAAAEGASAQGGAQPPDDVVDADFKEVKKD) are disordered.

This sequence belongs to the heat shock protein 70 family.

Functionally, acts as a chaperone. This is Chaperone protein DnaK from Burkholderia pseudomallei (strain 1710b).